The following is a 154-amino-acid chain: Lipoprotein signal peptidase (154 aa).

3 consecutive transmembrane segments (helical) span residues 8 to 28 (LYLI…NYIV), 58 to 78 (IFSG…AVVI), and 88 to 108 (NGLF…NFID). Catalysis depends on residues Asp117 and Asp133. The chain crosses the membrane as a helical span at residues 131-151 (IADSAITVGIILVFIYLIFIS).

It belongs to the peptidase A8 family.

Its subcellular location is the cell membrane. It catalyses the reaction Release of signal peptides from bacterial membrane prolipoproteins. Hydrolyzes -Xaa-Yaa-Zaa-|-(S,diacylglyceryl)Cys-, in which Xaa is hydrophobic (preferably Leu), and Yaa (Ala or Ser) and Zaa (Gly or Ala) have small, neutral side chains.. It functions in the pathway protein modification; lipoprotein biosynthesis (signal peptide cleavage). Functionally, this protein specifically catalyzes the removal of signal peptides from prolipoproteins. This chain is Lipoprotein signal peptidase, found in Lactobacillus johnsonii (strain CNCM I-12250 / La1 / NCC 533).